A 118-amino-acid chain; its full sequence is uncharacterized protein (118 aa).

The disordered stretch occupies residues methionine 1–serine 49. Residues lysine 11–serine 25 show a composition bias toward basic residues. The segment covering lysine 26–leucine 43 has biased composition (basic and acidic residues).

This is an uncharacterized protein from Schizosaccharomyces pombe (strain 972 / ATCC 24843) (Fission yeast).